The following is a 119-amino-acid chain: Phosphoribosyl-AMP cyclohydrolase (119 aa).

Asp72 contacts Mg(2+). A Zn(2+)-binding site is contributed by Cys73. Asp74 and Asp76 together coordinate Mg(2+). Zn(2+) contacts are provided by Cys89 and Cys96.

It belongs to the PRA-CH family. In terms of assembly, homodimer. Requires Mg(2+) as cofactor. Zn(2+) serves as cofactor.

It localises to the cytoplasm. The catalysed reaction is 1-(5-phospho-beta-D-ribosyl)-5'-AMP + H2O = 1-(5-phospho-beta-D-ribosyl)-5-[(5-phospho-beta-D-ribosylamino)methylideneamino]imidazole-4-carboxamide. Its pathway is amino-acid biosynthesis; L-histidine biosynthesis; L-histidine from 5-phospho-alpha-D-ribose 1-diphosphate: step 3/9. In terms of biological role, catalyzes the hydrolysis of the adenine ring of phosphoribosyl-AMP. The polypeptide is Phosphoribosyl-AMP cyclohydrolase (Methanocella arvoryzae (strain DSM 22066 / NBRC 105507 / MRE50)).